The following is a 497-amino-acid chain: UDP-N-acetylmuramoyl-L-alanyl-D-glutamate--2,6-diaminopimelate ligase (497 aa).

A UDP-N-acetyl-alpha-D-muramoyl-L-alanyl-D-glutamate-binding site is contributed by Ser32. 113 to 119 (GTNGKTT) is a binding site for ATP. Residues 155-156 (TT), Ser182, Gln188, and Arg190 each bind UDP-N-acetyl-alpha-D-muramoyl-L-alanyl-D-glutamate. Position 222 is an N6-carboxylysine (Lys222). Meso-2,6-diaminopimelate contacts are provided by residues Arg385, 409 to 412 (DNPR), Gly460, and Glu464. Positions 409 to 412 (DNPR) match the Meso-diaminopimelate recognition motif motif.

Belongs to the MurCDEF family. MurE subfamily. It depends on Mg(2+) as a cofactor. Post-translationally, carboxylation is probably crucial for Mg(2+) binding and, consequently, for the gamma-phosphate positioning of ATP.

Its subcellular location is the cytoplasm. It carries out the reaction UDP-N-acetyl-alpha-D-muramoyl-L-alanyl-D-glutamate + meso-2,6-diaminopimelate + ATP = UDP-N-acetyl-alpha-D-muramoyl-L-alanyl-gamma-D-glutamyl-meso-2,6-diaminopimelate + ADP + phosphate + H(+). Its pathway is cell wall biogenesis; peptidoglycan biosynthesis. In terms of biological role, catalyzes the addition of meso-diaminopimelic acid to the nucleotide precursor UDP-N-acetylmuramoyl-L-alanyl-D-glutamate (UMAG) in the biosynthesis of bacterial cell-wall peptidoglycan. This Thermosynechococcus vestitus (strain NIES-2133 / IAM M-273 / BP-1) protein is UDP-N-acetylmuramoyl-L-alanyl-D-glutamate--2,6-diaminopimelate ligase.